A 119-amino-acid chain; its full sequence is Platelet basic protein (119 aa).

A signal peptide spans Met1–Leu33. Residues Val34–Gly39 constitute a propeptide that is removed on maturation. 2 cysteine pairs are disulfide-bonded: Cys54-Cys80 and Cys56-Cys96.

It localises to the secreted. Chemoattractant factor for neutrophils. The sequence is that of Platelet basic protein (PPBP) from Sus scrofa (Pig).